Reading from the N-terminus, the 111-residue chain is Small ribosomal subunit protein bS6 (111 aa).

It belongs to the bacterial ribosomal protein bS6 family.

Its function is as follows. Binds together with bS18 to 16S ribosomal RNA. This Francisella philomiragia subsp. philomiragia (strain ATCC 25017 / CCUG 19701 / FSC 153 / O#319-036) protein is Small ribosomal subunit protein bS6.